The sequence spans 452 residues: Pup--protein ligase (452 aa).

Glutamate 9 is a Mg(2+) binding site. An ATP-binding site is contributed by arginine 53. Position 55 (tyrosine 55) interacts with Mg(2+). The Proton acceptor role is filled by aspartate 57. Glutamate 63 is a Mg(2+) binding site. Threonine 66 and tryptophan 419 together coordinate ATP.

It belongs to the Pup ligase/Pup deamidase family. Pup-conjugating enzyme subfamily.

The catalysed reaction is ATP + [prokaryotic ubiquitin-like protein]-L-glutamate + [protein]-L-lysine = ADP + phosphate + N(6)-([prokaryotic ubiquitin-like protein]-gamma-L-glutamyl)-[protein]-L-lysine.. Its pathway is protein degradation; proteasomal Pup-dependent pathway. It participates in protein modification; protein pupylation. Catalyzes the covalent attachment of the prokaryotic ubiquitin-like protein modifier Pup to the proteasomal substrate proteins, thereby targeting them for proteasomal degradation. This tagging system is termed pupylation. The ligation reaction involves the side-chain carboxylate of the C-terminal glutamate of Pup and the side-chain amino group of a substrate lysine. This chain is Pup--protein ligase, found in Rhodococcus jostii (strain RHA1).